We begin with the raw amino-acid sequence, 292 residues long: Protease HtpX (292 aa).

2 consecutive transmembrane segments (helical) span residues 4–24 (IILF…ILAV) and 32–52 (IYGL…LSLI). Residue H139 coordinates Zn(2+). E140 is an active-site residue. Position 143 (H143) interacts with Zn(2+). 2 consecutive transmembrane segments (helical) span residues 150–170 (ITMT…SRII) and 193–213 (FLFF…ASII). E222 is a binding site for Zn(2+).

This sequence belongs to the peptidase M48B family. Zn(2+) serves as cofactor.

The protein localises to the cell membrane. The chain is Protease HtpX from Buchnera aphidicola subsp. Schizaphis graminum (strain Sg).